The primary structure comprises 638 residues: LEAF RUST 10 DISEASE-RESISTANCE LOCUS RECEPTOR-LIKE PROTEIN KINASE-like 2.1 (638 aa).

Positions 1–29 are cleaved as a signal peptide; that stretch reads MINLSLYQTNSLSYTIIWMLFVIPSCVLS. At 30 to 264 the chain is on the extracellular side; the sequence is VDERQKHCSP…EHTCGKMGIG (235 aa). N-linked (GlcNAc...) asparagine glycosylation is found at N69, N114, N136, N204, and N239. A helical membrane pass occupies residues 265–285; sequence IGLGCGFLGATLITVCLLCFF. The Cytoplasmic portion of the chain corresponds to 286-638; the sequence is FQKRRTSHHL…YTEVFIGSTS (353 aa). In terms of domain architecture, Protein kinase spans 321-609; the sequence is KLFSHTLGKG…VLEVPPKPSI (289 aa). Residues 327 to 335 and K349 each bind ATP; that span reads LGKGGFGTV. At Y393 the chain carries Phosphotyrosine. D444 serves as the catalytic Proton acceptor. Position 484 is a phosphothreonine (T484).

It belongs to the protein kinase superfamily. Ser/Thr protein kinase family.

It localises to the membrane. It carries out the reaction L-seryl-[protein] + ATP = O-phospho-L-seryl-[protein] + ADP + H(+). The enzyme catalyses L-threonyl-[protein] + ATP = O-phospho-L-threonyl-[protein] + ADP + H(+). This is LEAF RUST 10 DISEASE-RESISTANCE LOCUS RECEPTOR-LIKE PROTEIN KINASE-like 2.1 from Arabidopsis thaliana (Mouse-ear cress).